A 351-amino-acid chain; its full sequence is Dihydroorotate dehydrogenase (quinone) (351 aa).

Residues 61-65 and threonine 85 contribute to the FMN site; that span reads AGLDK. Residue lysine 65 coordinates substrate. 110–114 serves as a coordination point for substrate; the sequence is NRMGF. Positions 139 and 172 each coordinate FMN. Asparagine 172 contributes to the substrate binding site. The active-site Nucleophile is serine 175. Asparagine 177 contributes to the substrate binding site. The FMN site is built by lysine 217 and threonine 245. Residue 246–247 coordinates substrate; sequence NT. FMN is bound by residues glycine 268, glycine 297, and 318–319; that span reads YS.

The protein belongs to the dihydroorotate dehydrogenase family. Type 2 subfamily. In terms of assembly, monomer. The cofactor is FMN.

The protein localises to the cell membrane. The catalysed reaction is (S)-dihydroorotate + a quinone = orotate + a quinol. It functions in the pathway pyrimidine metabolism; UMP biosynthesis via de novo pathway; orotate from (S)-dihydroorotate (quinone route): step 1/1. In terms of biological role, catalyzes the conversion of dihydroorotate to orotate with quinone as electron acceptor. In Xanthomonas axonopodis pv. citri (strain 306), this protein is Dihydroorotate dehydrogenase (quinone).